Reading from the N-terminus, the 123-residue chain is Small ribosomal subunit protein uS12 (123 aa).

Positions 1 to 32 (MPTINQLIRKPREAQKARDKAPALQSSPQKRG) are disordered. Residues 10–21 (KPREAQKARDKA) are compositionally biased toward basic and acidic residues. Residue aspartate 89 is modified to 3-methylthioaspartic acid.

Belongs to the universal ribosomal protein uS12 family. As to quaternary structure, part of the 30S ribosomal subunit. Contacts proteins S8 and S17. May interact with IF1 in the 30S initiation complex.

Functionally, with S4 and S5 plays an important role in translational accuracy. In terms of biological role, interacts with and stabilizes bases of the 16S rRNA that are involved in tRNA selection in the A site and with the mRNA backbone. Located at the interface of the 30S and 50S subunits, it traverses the body of the 30S subunit contacting proteins on the other side and probably holding the rRNA structure together. The combined cluster of proteins S8, S12 and S17 appears to hold together the shoulder and platform of the 30S subunit. This Azorhizobium caulinodans (strain ATCC 43989 / DSM 5975 / JCM 20966 / LMG 6465 / NBRC 14845 / NCIMB 13405 / ORS 571) protein is Small ribosomal subunit protein uS12.